We begin with the raw amino-acid sequence, 750 residues long: Coiled-coil domain-containing protein 142 (750 aa).

Residues 1 to 29 (MAQASRSGSLPPLVIVPPLRAQPGGTGEE) are disordered. The stretch at 87-110 (ALQRLRAVLLRLHREREQLLQARD) forms a coiled coil. The tract at residues 687–714 (LEPPLQPGTSPAQTGQLQSTLGGRGPSP) is disordered. Over residues 693-707 (PGTSPAQTGQLQSTL) the composition is skewed to polar residues.

The chain is Coiled-coil domain-containing protein 142 (CCDC142) from Homo sapiens (Human).